A 594-amino-acid chain; its full sequence is Elongation factor 4 (594 aa).

A tr-type G domain is found at 2–184 (KNIRNFSIIA…TIVAKVPAPE (183 aa)). Residues 14 to 19 (DHGKST) and 131 to 134 (NKID) each bind GTP.

This sequence belongs to the TRAFAC class translation factor GTPase superfamily. Classic translation factor GTPase family. LepA subfamily.

Its subcellular location is the cell inner membrane. The catalysed reaction is GTP + H2O = GDP + phosphate + H(+). Its function is as follows. Required for accurate and efficient protein synthesis under certain stress conditions. May act as a fidelity factor of the translation reaction, by catalyzing a one-codon backward translocation of tRNAs on improperly translocated ribosomes. Back-translocation proceeds from a post-translocation (POST) complex to a pre-translocation (PRE) complex, thus giving elongation factor G a second chance to translocate the tRNAs correctly. Binds to ribosomes in a GTP-dependent manner. This is Elongation factor 4 from Francisella tularensis subsp. tularensis (strain FSC 198).